The following is a 369-amino-acid chain: Peptide chain release factor 2 (369 aa).

At glutamine 250 the chain carries N5-methylglutamine.

Belongs to the prokaryotic/mitochondrial release factor family. Post-translationally, methylated by PrmC. Methylation increases the termination efficiency of RF2.

It is found in the cytoplasm. Functionally, peptide chain release factor 2 directs the termination of translation in response to the peptide chain termination codons UGA and UAA. This Rickettsia prowazekii (strain Madrid E) protein is Peptide chain release factor 2 (prfB).